The sequence spans 997 residues: MKSSGSARTARRNAALPSTDAQTGALATVANGRAKPATKPKDSIRQTKRTTKAAGASKPAARTREDKDGPLFEDIRFLGRLLGDVVREQEGDTVFDVVETIRQTAVKFRREDDSQAAQTLEKKLRKLTPEQTVSVVRAFSYFSHLANIAEDRHHNRRRRIHALAGSAPQPGTVAYALEQLKTSGNASKRVLQRFFDDALIVPVLTAHPTEVQRKSILDAQHDIARLLAERDQPLTARERAYNESMLRARVTALWQTRMLRDARLTVGDEIENALSYYRTTFLDELPALYGDIEAALAEHGLPARVPAFFQMGSWIGGDRDGNPNVTAATLDEAINRQAAVILEHYLEQVHKLGAELSVSNLLVGANDAVKALAAASPDQSPHRVDEPYRRALIGIYTRLAASARVRLGEGTVPVRSAGRGAPPVRAVPYADSEAFVADLKVLTASLEEHHGASLAAPRLTPLMRAAEVFGFHLSSIDLRQSSDIHEAVVAELFARAGVHADYASLSEDDKLIALLAALADPRPLRSPYIEYSALAQSELGVFEKAREVRAQFGPRAVRNYIISHTETVSDLVEVLLLQKETGLLEGAFGAAHDSARNGLMVIPLFETIPDLRDAARIMREYFALPGIEALIAHQGAEQEVMLGYSDSNKDGGFLTSNWELYRAELALVDLFRDRKITLRLFHGRGGTVGRGGGPTYQAILSQPPGTVNGQIRLTEQGEVIASKFANPEIGRRNLETVVAATLEASLLPQSNAPAQLPAFEAAMQALSDAAMASYRALVYETPGFTDYFFAATPITEIAELNIGSRPASRKLQDPKNRRIEDLRAIPWGFSWGQCRLLLTGWYGFGSAVSAYLDGAPDAAARTKRVALLKKMNKTWPFFANLLSNMDMVLAKTDLAVASRYAQLVADRKLRKHVFERIVAEWERTAQALAEITGHEGRLATNPLLARSIKNRFPYLDPLNHLQVELIKRHRAGDTNARLRRGIHLTINGIAAGLRNTG.

Positions 1-67 are disordered; sequence MKSSGSARTA…KPAARTREDK (67 aa). Active-site residues include histidine 207 and lysine 649.

Belongs to the PEPCase type 1 family. Mg(2+) serves as cofactor.

It catalyses the reaction oxaloacetate + phosphate = phosphoenolpyruvate + hydrogencarbonate. Functionally, forms oxaloacetate, a four-carbon dicarboxylic acid source for the tricarboxylic acid cycle. This Burkholderia vietnamiensis (strain G4 / LMG 22486) (Burkholderia cepacia (strain R1808)) protein is Phosphoenolpyruvate carboxylase.